Reading from the N-terminus, the 339-residue chain is Uroporphyrinogen decarboxylase (339 aa).

Residues 21–25, Asp-71, Tyr-147, Ser-202, and His-315 contribute to the substrate site; that span reads RQAGR.

The protein belongs to the uroporphyrinogen decarboxylase family. In terms of assembly, homodimer.

The protein localises to the cytoplasm. The enzyme catalyses uroporphyrinogen III + 4 H(+) = coproporphyrinogen III + 4 CO2. It functions in the pathway porphyrin-containing compound metabolism; protoporphyrin-IX biosynthesis; coproporphyrinogen-III from 5-aminolevulinate: step 4/4. In terms of biological role, catalyzes the decarboxylation of four acetate groups of uroporphyrinogen-III to yield coproporphyrinogen-III. In Helicobacter pylori (strain G27), this protein is Uroporphyrinogen decarboxylase.